We begin with the raw amino-acid sequence, 436 residues long: Kynureninase (436 aa).

Residues Leu-88, Thr-89, 116–119 (FPSD), Asp-202, His-205, and Tyr-227 each bind pyridoxal 5'-phosphate. At Lys-228 the chain carries N6-(pyridoxal phosphate)lysine. 2 residues coordinate pyridoxal 5'-phosphate: Trp-280 and Asn-308.

Belongs to the kynureninase family. Homodimer. Requires pyridoxal 5'-phosphate as cofactor.

It localises to the cytoplasm. It catalyses the reaction L-kynurenine + H2O = anthranilate + L-alanine + H(+). The enzyme catalyses 3-hydroxy-L-kynurenine + H2O = 3-hydroxyanthranilate + L-alanine + H(+). It functions in the pathway amino-acid degradation; L-kynurenine degradation; L-alanine and anthranilate from L-kynurenine: step 1/1. The protein operates within cofactor biosynthesis; NAD(+) biosynthesis; quinolinate from L-kynurenine: step 2/3. Functionally, catalyzes the cleavage of L-kynurenine (L-Kyn) and L-3-hydroxykynurenine (L-3OHKyn) into anthranilic acid (AA) and 3-hydroxyanthranilic acid (3-OHAA), respectively. In Schistosoma japonicum (Blood fluke), this protein is Kynureninase.